The sequence spans 274 residues: Probable formate transporter (274 aa).

The next 7 membrane-spanning stretches (helical) occupy residues 31 to 51 (IVLS…AEVV), 62 to 82 (AGLV…LVVI), 118 to 138 (VFNL…TGIL), 176 to 196 (AFWR…LAIA), 200 to 220 (IIGK…IGFE), 226 to 246 (MFFI…FFMN), and 248 to 268 (LIPV…CLYW).

Belongs to the FNT transporter (TC 1.A.16) family.

The protein resides in the cell membrane. May act as a formate transporter. The chain is Probable formate transporter (fdhC) from Methanothermobacter thermautotrophicus (Methanobacterium thermoformicicum).